Reading from the N-terminus, the 557-residue chain is MMVVLLGATTLVLVAVAPWVLSAAAGGKNLKSPQKVEVDIIDDNFILRWNRSDESVGNVTFSFDYQKTGMDNWIKLSGCQNITSTKCNFSSLKLNVYEEIKLRIRAEKENTSSWYEVDSFTPFRKAQIGPPEVHLEAEDKAIVIHISPGTKDSVMWALDGLSFTYSLVIWKNSSGVEERIENIYSRHKIYKLSPETTYCLKVKAALLTSWKIGVYSPVHCIKTTVENELPPPENIEVSVQNQNYVLKWDYTYANMTFQVQWLHAFLKRNPGNHLYKWKQIPDCENVKTTQCVFPQNVFQKGIYLLRVQASDGNNTSFWSEEIKFDTEIQAFLLPPVFNIRSLSDSFHIYIGAPKQSGNTPVIQDYPLIYEIIFWENTSNAERKIIEKKTDVTVPNLKPLTVYCVKARAHTMDEKLNKSSVFSDAVCEKTKPGNTSKIWLIVGICIALFALPFVIYAAKVFLRCINYVFFPSLKPSSSIDEYFSEQPLKNLLLSTSEEQIEKCFIIENISTIATVEETNQTDEDHKKYSSQTSQDSGNYSNEDESESKTSEELQQDFV.

An N-terminal signal peptide occupies residues 1-27 (MMVVLLGATTLVLVAVAPWVLSAAAGG). Residues 28–436 (KNLKSPQKVE…EKTKPGNTSK (409 aa)) lie on the Extracellular side of the membrane. Fibronectin type-III domains are found at residues 32-126 (SPQK…FRKA), 127-227 (QIGP…TVEN), 231-329 (PPEN…TEIQ), and 331-432 (FLLP…TKPG). Asn50, Asn58, Asn81, Asn88, Asn110, and Asn172 each carry an N-linked (GlcNAc...) asparagine glycan. The cysteines at positions 79 and 87 are disulfide-linked. The cysteines at positions 199 and 220 are disulfide-linked. Asn254 carries N-linked (GlcNAc...) asparagine glycosylation. A disulfide bridge links Cys283 with Cys291. Asn313, Asn314, Asn376, Asn416, and Asn433 each carry an N-linked (GlcNAc...) asparagine glycan. A disulfide bond links Cys403 and Cys426. A helical membrane pass occupies residues 437–457 (IWLIVGICIALFALPFVIYAA). Over 458 to 557 (KVFLRCINYV…TSEELQQDFV (100 aa)) the chain is Cytoplasmic. A lipid anchor (S-palmitoyl cysteine) is attached at Cys463. A phosphotyrosine; by TYK2 mark is found at Tyr466 and Tyr481. The important for interaction with TYK2 stretch occupies residues 491 to 500 (LLSTSEEQIE). Ser495 is subject to Phosphoserine. Glycyl lysine isopeptide (Lys-Gly) (interchain with G-Cter in ubiquitin) cross-links involve residues Lys501, Lys525, and Lys526. Residues 516–557 (ETNQTDEDHKKYSSQTSQDSGNYSNEDESESKTSEELQQDFV) are disordered. A compositionally biased stretch (polar residues) spans 528 to 539 (SSQTSQDSGNYS). Ser535 carries the phosphoserine modification.

This sequence belongs to the type II cytokine receptor family. Heterodimer with IFNAR2; forming the receptor for type I interferon. Interacts with TYK2. Interacts with STAT1 and STAT2; the interaction requires its phosphorylation at Tyr-466. Interacts (serine-phosphorylated form) with FBXW11, the substrate recognition component of a SCF (SKP1-CUL1-F-box protein) E3 ubiquitin-protein ligase complex. Interacts with SHMT2; this promotes interaction with ABRAXAS2 and the BRISC complex. Interacts with TRIM10; this interaction prevents association between IFNAR1 and TYK2. Ubiquitinated, leading to its internalization and degradation. Polyubiquitinated via 'Lys-48'-linked and 'Lys-63'-linked ubiquitin chains, leading to receptor internalization and lysosomal degradation. The 'Lys-63'-linked ubiquitin chains are cleaved off by the BRISC complex. Post-translationally, phosphorylated on tyrosine residues in response to interferon-binding: phosphorylation by TYK2 tyrosine kinase creates docking sites for STAT proteins. Phosphorylated on serine residues in response to interferon binding; this promotes interaction with FBXW11 and ubiquitination. In terms of processing, palmitoylation at Cys-463 is required for the activation of STAT1 and STAT2. In terms of tissue distribution, IFN receptors are present in all tissues and even on the surface of most IFN-resistant cells. Isoform 1, isoform 2 and isoform 3 are expressed in the IFN-alpha sensitive myeloma cell line U266B1. Isoform 2 and isoform 3 are expressed in the IFN-alpha resistant myeloma cell line U266R. Isoform 1 is not expressed in IFN-alpha resistant myeloma cell line U266R.

The protein resides in the cell membrane. It localises to the late endosome. The protein localises to the lysosome. In terms of biological role, together with IFNAR2, forms the heterodimeric receptor for type I interferons (including interferons alpha, beta, epsilon, omega and kappa). Type I interferon binding activates the JAK-STAT signaling cascade, resulting in transcriptional activation or repression of interferon-regulated genes that encode the effectors of the interferon response. Mechanistically, type I interferon-binding brings the IFNAR1 and IFNAR2 subunits into close proximity with one another, driving their associated Janus kinases (JAKs) (TYK2 bound to IFNAR1 and JAK1 bound to IFNAR2) to cross-phosphorylate one another. The activated kinases phosphorylate specific tyrosine residues on the intracellular domains of IFNAR1 and IFNAR2, forming docking sites for the STAT transcription factors. STAT proteins are then phosphorylated by the JAKs, promoting their translocation into the nucleus to regulate expression of interferon-regulated genes. Can also act independently of IFNAR2: form an active IFNB1 receptor by itself and activate a signaling cascade that does not involve activation of the JAK-STAT pathway. This is Interferon alpha/beta receptor 1 (IFNAR1) from Homo sapiens (Human).